We begin with the raw amino-acid sequence, 432 residues long: Trigger factor (432 aa).

The PPIase FKBP-type domain maps to 163 to 248 (GDIAVIDFEG…LKALNKKELP (86 aa)).

The protein belongs to the FKBP-type PPIase family. Tig subfamily.

It is found in the cytoplasm. It carries out the reaction [protein]-peptidylproline (omega=180) = [protein]-peptidylproline (omega=0). Functionally, involved in protein export. Acts as a chaperone by maintaining the newly synthesized protein in an open conformation. Functions as a peptidyl-prolyl cis-trans isomerase. In Thermoanaerobacter pseudethanolicus (strain ATCC 33223 / 39E) (Clostridium thermohydrosulfuricum), this protein is Trigger factor.